We begin with the raw amino-acid sequence, 673 residues long: Methionine--tRNA ligase (673 aa).

The 'HIGH' region motif lies at P13–H23. Residues C144, C147, C157, and C160 each coordinate Zn(2+). A 'KMSKS' region motif is present at residues K330–S334. Residue K333 participates in ATP binding. In terms of domain architecture, tRNA-binding spans D572–S673.

Belongs to the class-I aminoacyl-tRNA synthetase family. MetG type 1 subfamily. Homodimer. Zn(2+) is required as a cofactor.

The protein localises to the cytoplasm. The enzyme catalyses tRNA(Met) + L-methionine + ATP = L-methionyl-tRNA(Met) + AMP + diphosphate. In terms of biological role, is required not only for elongation of protein synthesis but also for the initiation of all mRNA translation through initiator tRNA(fMet) aminoacylation. In Dichelobacter nodosus (strain VCS1703A), this protein is Methionine--tRNA ligase.